Reading from the N-terminus, the 241-residue chain is Transcriptional regulatory protein SrrA (241 aa).

Residues 4–117 form the Response regulatory domain; it reads EILIVDDEDR…EVVLRVKALL (114 aa). D53 carries the post-translational modification 4-aspartylphosphate. Positions 133–233 form a DNA-binding region, ompR/PhoB-type; it reads RDVIEFKHLE…VWGVGYKFEV (101 aa).

Phosphorylated by SrrB.

The protein localises to the cytoplasm. Member of the two-component regulatory system SrrA/SrrB, which is involved in the global regulation of staphylococcal virulence factors in response to environmental oxygen levels as well as biofilm formation. Also plays an essential role in host-derived nitric oxide resistance by regulating hmp/flavohemoglobin, an enzyme that detoxifies nitric oxide by converting it to nitrate. Functions as a transcription regulator by direct binding to promoter regions of target genes. This Staphylococcus aureus (strain NCTC 8325 / PS 47) protein is Transcriptional regulatory protein SrrA (srrA).